We begin with the raw amino-acid sequence, 100 residues long: Urease subunit gamma (100 aa).

It belongs to the urease gamma subunit family. As to quaternary structure, heterotrimer of UreA (gamma), UreB (beta) and UreC (alpha) subunits. Three heterotrimers associate to form the active enzyme.

It is found in the cytoplasm. It catalyses the reaction urea + 2 H2O + H(+) = hydrogencarbonate + 2 NH4(+). It participates in nitrogen metabolism; urea degradation; CO(2) and NH(3) from urea (urease route): step 1/1. The sequence is that of Urease subunit gamma from Rhizobium rhizogenes (strain K84 / ATCC BAA-868) (Agrobacterium radiobacter).